We begin with the raw amino-acid sequence, 268 residues long: Small ribosomal subunit protein eS1 (268 aa).

Residues 1–21 (MAVGKNKGLSKGGKKGGKKKV) are disordered.

Belongs to the eukaryotic ribosomal protein eS1 family. Component of the small ribosomal subunit. Mature ribosomes consist of a small (40S) and a large (60S) subunit. The 40S subunit contains about 33 different proteins and 1 molecule of RNA (18S). The 60S subunit contains about 49 different proteins and 3 molecules of RNA (28S, 5.8S and 5S).

It localises to the cytoplasm. In terms of biological role, essential for oogenesis; required for late follicle cell development. The protein is Small ribosomal subunit protein eS1 of Drosophila erecta (Fruit fly).